The sequence spans 98 residues: Plastocyanin (98 aa).

The Plastocyanin-like domain occupies 1-98; that stretch reads DVTVKLGADS…AGMKGTITVQ (98 aa). The Cu cation site is built by His38, Cys83, His86, and Met91.

Belongs to the plastocyanin family. Cu(2+) is required as a cofactor.

It localises to the plastid. Its subcellular location is the chloroplast thylakoid membrane. Its function is as follows. Participates in electron transfer between P700 and the cytochrome b6-f complex in photosystem I. The sequence is that of Plastocyanin (petE) from Scenedesmus fuscus (Green alga).